A 1093-amino-acid polypeptide reads, in one-letter code: NACHT, LRR and PYD domains-containing protein 14 (1093 aa).

The 97-residue stretch at 1 to 97 folds into the Pyrin domain; the sequence is MADSSSSSFF…CERAKEEINW (97 aa). The interval 102-121 is disordered; sequence IGPDDAKAGETQEDQEAVLG. The NACHT domain occupies 177-499; the sequence is QIVVLQGAAG…MFYMLKGSWE (323 aa). 183–190 provides a ligand contact to ATP; it reads GAAGVGKT. LRR repeat units lie at residues 730–750, 759–780, 787–807, 816–836, 844–864, 873–894, 901–921, 930–951, 958–978, 987–1008, and 1015–1035; these read NLMH…KSLC, KLQT…NISN, SLIF…QLLC, YLER…EYLS, RLTH…KLMS, TLKS…YLST, SLTH…KLLC, NLQD…DLAS, NLRS…KILC, NIQR…DLSS, and RLIK…VKLY.

The protein belongs to the NLRP family. As to expression, testis-specific.

The protein resides in the cytoplasm. Functionally, may be involved in inflammation and spermatogenesis. This chain is NACHT, LRR and PYD domains-containing protein 14 (NLRP14), found in Homo sapiens (Human).